The following is a 418-amino-acid chain: Actin-related protein 3 (418 aa).

An N-acetylalanine modification is found at A2. N6-acetyllysine occurs at positions 240, 244, 251, and 254.

Belongs to the actin family. ARP3 subfamily. As to quaternary structure, component of the Arp2/3 complex composed of ACTR2/ARP2, ACTR3/ARP3, ARPC1B/p41-ARC, ARPC2/p34-ARC, ARPC3/p21-ARC, ARPC4/p20-ARC and ARPC5/p16-ARC. Interacts with WHDC1. Interacts weakly with MEFV. Interacts with AVIL. (Microbial infection) Interacts with bacterium B.thailandensis BimA.

The protein localises to the cytoplasm. It is found in the cytoskeleton. Its subcellular location is the cell projection. The protein resides in the nucleus. ATP-binding component of the Arp2/3 complex, a multiprotein complex that mediates actin polymerization upon stimulation by nucleation-promoting factor (NPF). The Arp2/3 complex mediates the formation of branched actin networks in the cytoplasm, providing the force for cell motility. Seems to contact the pointed end of the daughter actin filament. In podocytes, required for the formation of lamellipodia downstream of AVIL and PLCE1 regulation. In addition to its role in the cytoplasmic cytoskeleton, the Arp2/3 complex also promotes actin polymerization in the nucleus, thereby regulating gene transcription and repair of damaged DNA. The Arp2/3 complex promotes homologous recombination (HR) repair in response to DNA damage by promoting nuclear actin polymerization, leading to drive motility of double-strand breaks (DSBs). Plays a role in ciliogenesis. In Mus musculus (Mouse), this protein is Actin-related protein 3 (Actr3).